A 235-amino-acid polypeptide reads, in one-letter code: MKKINIIKIVFIITVILISTISPIIKSDSKKDISNVKSDLLYAYTITPYDYKNCRVNFSTTHTLNIDTQKYRGKDYYISSEMSYEASQKFKRDDHVDVFGLFYILNSHTGEYIYGGITPAQNNKVNHKLLGNLFISGESQQNLNNKIILEKDIVTFQEIDFKIRKYLMDNYKIYDATSPYVSGRIEIGTKDGKHEQIDLFDSPNEGTRSDIFAKYKDNRIINMKNFSHFDIYLEK.

The signal sequence occupies residues 1 to 27; that stretch reads MKKINIIKIVFIITVILISTISPIIKS. 3 residues coordinate Zn(2+): H194, H228, and D230.

This sequence belongs to the staphylococcal/streptococcal toxin family.

Superantigen that acts as a causative agent of the symptoms associated with scarlet fever. Has been associated with streptococcal toxic shock-like disease and may play a role in the early events of rheumatic fever. Superantigens cross-link major histocompatibility complex (MHC) class II and T-cell receptor (TCR) molecules, resulting in an overstimulation of T-cells associated with a massive release of pyrogenic and inflammatory cytokines. This chain is Exotoxin type C (speC), found in Streptococcus pyogenes serotype M1.